The sequence spans 159 residues: Lipoprotein LpqH (159 aa).

The first 21 residues, 1–21, serve as a signal peptide directing secretion; it reads MKRGLTVAVAGAAILVAGLSG. The N-palmitoyl cysteine moiety is linked to residue Cys22. The S-diacylglycerol cysteine moiety is linked to residue Cys22. The disordered stretch occupies residues 24–51; sequence SNKSTTGSGETTTAAGTTASPGAASGPK. Positions 27–49 are enriched in low complexity; sequence STTGSGETTTAAGTTASPGAASG.

The protein belongs to the mycobacterial 19 kDa antigen family. In terms of processing, modified by Lgt on Cys-22 with an S-linked diacylglycerol with a mixture of C16, C18 and C19 fatty acids, signal peptide is removed by LspA, modifed by Lnt with an amide-linked mixture of C16 and C19 fatty acids.

Its subcellular location is the cell membrane. Might be involved in ligand transport. A host TLR2 agonist, modifies host gene expression in response to pathogen. This is Lipoprotein LpqH (lpqH) from Mycobacterium tuberculosis (strain CDC 1551 / Oshkosh).